We begin with the raw amino-acid sequence, 209 residues long: Molybdenum cofactor guanylyltransferase (209 aa).

GTP is bound by residues 13-15 (LAG), K26, N54, D72, and D107. D107 contributes to the Mg(2+) binding site.

This sequence belongs to the MobA family. In terms of assembly, monomer. Mg(2+) is required as a cofactor.

It localises to the cytoplasm. The catalysed reaction is Mo-molybdopterin + GTP + H(+) = Mo-molybdopterin guanine dinucleotide + diphosphate. In terms of biological role, transfers a GMP moiety from GTP to Mo-molybdopterin (Mo-MPT) cofactor (Moco or molybdenum cofactor) to form Mo-molybdopterin guanine dinucleotide (Mo-MGD) cofactor. In Nitrobacter hamburgensis (strain DSM 10229 / NCIMB 13809 / X14), this protein is Molybdenum cofactor guanylyltransferase.